The chain runs to 462 residues: tRNA modification GTPase MnmE (462 aa).

Arg23, Glu88, and Arg127 together coordinate (6S)-5-formyl-5,6,7,8-tetrahydrofolate. One can recognise a TrmE-type G domain in the interval 224–383; sequence GLATVIIGRP…LEKAIADLFF (160 aa). Position 234 (Asn234) interacts with K(+). GTP-binding positions include 234–239, 253–259, and 278–281; these read NVGKSS, TDIPGTT, and DTAG. Ser238 is a Mg(2+) binding site. 3 residues coordinate K(+): Thr253, Ile255, and Thr258. Position 259 (Thr259) interacts with Mg(2+). Lys462 serves as a coordination point for (6S)-5-formyl-5,6,7,8-tetrahydrofolate.

The protein belongs to the TRAFAC class TrmE-Era-EngA-EngB-Septin-like GTPase superfamily. TrmE GTPase family. Homodimer. Heterotetramer of two MnmE and two MnmG subunits. K(+) is required as a cofactor.

Its subcellular location is the cytoplasm. Exhibits a very high intrinsic GTPase hydrolysis rate. Involved in the addition of a carboxymethylaminomethyl (cmnm) group at the wobble position (U34) of certain tRNAs, forming tRNA-cmnm(5)s(2)U34. In Geobacillus thermodenitrificans (strain NG80-2), this protein is tRNA modification GTPase MnmE.